A 410-amino-acid chain; its full sequence is Dephospho-CoA kinase (410 aa).

In terms of domain architecture, DPCK spans 3–201 (CIGITGGIGA…HRILPFAYNL (199 aa)). An ATP-binding site is contributed by 11 to 16 (GAGKSL). The UPF0157 stretch occupies residues 196–410 (PFAYNLSQRQ…EWADSTGWRL (215 aa)).

In the N-terminal section; belongs to the CoaE family. The protein in the C-terminal section; belongs to the UPF0157 (GrpB) family.

Its subcellular location is the cytoplasm. It carries out the reaction 3'-dephospho-CoA + ATP = ADP + CoA + H(+). Its pathway is cofactor biosynthesis; coenzyme A biosynthesis; CoA from (R)-pantothenate: step 5/5. In terms of biological role, catalyzes the phosphorylation of the 3'-hydroxyl group of dephosphocoenzyme A to form coenzyme A. This Mycobacterium leprae (strain TN) protein is Dephospho-CoA kinase.